Here is a 108-residue protein sequence, read N- to C-terminus: Cell cycle protein GpsB (108 aa).

A coiled-coil region spans residues 32–69 (LDNVIKDYENFNAQIEALKAENEALKKAKFQARNTVSA).

Belongs to the GpsB family. Forms polymers through the coiled coil domains. Interacts with PBP1, MreC and EzrA.

Its subcellular location is the cytoplasm. Divisome component that associates with the complex late in its assembly, after the Z-ring is formed, and is dependent on DivIC and PBP2B for its recruitment to the divisome. Together with EzrA, is a key component of the system that regulates PBP1 localization during cell cycle progression. Its main role could be the removal of PBP1 from the cell pole after pole maturation is completed. Also contributes to the recruitment of PBP1 to the division complex. Not essential for septum formation. The sequence is that of Cell cycle protein GpsB from Streptococcus pyogenes serotype M28 (strain MGAS6180).